Consider the following 634-residue polypeptide: 1-deoxy-D-xylulose-5-phosphate synthase (634 aa).

Thiamine diphosphate-binding positions include histidine 74 and 115 to 117 (AHS). Aspartate 146 contacts Mg(2+). Residues 147–148 (GA), asparagine 176, tyrosine 283, and glutamate 365 each bind thiamine diphosphate. Asparagine 176 lines the Mg(2+) pocket.

Belongs to the transketolase family. DXPS subfamily. As to quaternary structure, homodimer. Mg(2+) is required as a cofactor. The cofactor is thiamine diphosphate.

It carries out the reaction D-glyceraldehyde 3-phosphate + pyruvate + H(+) = 1-deoxy-D-xylulose 5-phosphate + CO2. The protein operates within metabolic intermediate biosynthesis; 1-deoxy-D-xylulose 5-phosphate biosynthesis; 1-deoxy-D-xylulose 5-phosphate from D-glyceraldehyde 3-phosphate and pyruvate: step 1/1. Catalyzes the acyloin condensation reaction between C atoms 2 and 3 of pyruvate and glyceraldehyde 3-phosphate to yield 1-deoxy-D-xylulose-5-phosphate (DXP). This chain is 1-deoxy-D-xylulose-5-phosphate synthase, found in Burkholderia lata (strain ATCC 17760 / DSM 23089 / LMG 22485 / NCIMB 9086 / R18194 / 383).